A 272-amino-acid polypeptide reads, in one-letter code: Ribonuclease 3 (272 aa).

A disordered region spans residues 1-22; the sequence is MSLQFLRSEASDGAGETSDASS. One can recognise an RNase III domain in the interval 31-162; the sequence is TATHLARLTG…LVGAIYLDQG (132 aa). E75 provides a ligand contact to Mg(2+). Residue D79 is part of the active site. Mg(2+) is bound by residues D148 and E151. The active site involves E151. Residues 189 to 258 enclose the DRBM domain; the sequence is NYKSRLIEYT…AKEAMKRLES (70 aa).

This sequence belongs to the ribonuclease III family. As to quaternary structure, homodimer. Mg(2+) serves as cofactor.

The protein localises to the cytoplasm. It catalyses the reaction Endonucleolytic cleavage to 5'-phosphomonoester.. Digests double-stranded RNA. Involved in the processing of primary rRNA transcript to yield the immediate precursors to the large and small rRNAs (23S and 16S). Processes some mRNAs, and tRNAs when they are encoded in the rRNA operon. Processes pre-crRNA and tracrRNA of type II CRISPR loci if present in the organism. The protein is Ribonuclease 3 of Chlorobaculum tepidum (strain ATCC 49652 / DSM 12025 / NBRC 103806 / TLS) (Chlorobium tepidum).